We begin with the raw amino-acid sequence, 892 residues long: Alanine--tRNA ligase (892 aa).

His-578, His-582, Cys-681, and His-685 together coordinate Zn(2+).

The protein belongs to the class-II aminoacyl-tRNA synthetase family. Zn(2+) is required as a cofactor.

Its subcellular location is the cytoplasm. The enzyme catalyses tRNA(Ala) + L-alanine + ATP = L-alanyl-tRNA(Ala) + AMP + diphosphate. Catalyzes the attachment of alanine to tRNA(Ala) in a two-step reaction: alanine is first activated by ATP to form Ala-AMP and then transferred to the acceptor end of tRNA(Ala). Also edits incorrectly charged Ser-tRNA(Ala) and Gly-tRNA(Ala) via its editing domain. This chain is Alanine--tRNA ligase, found in Cutibacterium acnes (strain DSM 16379 / KPA171202) (Propionibacterium acnes).